Consider the following 557-residue polypeptide: Small ribosomal subunit protein bS1 (557 aa).

6 consecutive S1 motif domains span residues 21–87 (GSIV…LSRE), 105–171 (SATV…VSRR), 192–260 (GMEV…LGLK), 277–347 (GTKL…LGLK), 364–434 (GDRV…LGVK), and 451–520 (GAIV…LSIR).

This sequence belongs to the bacterial ribosomal protein bS1 family.

Its function is as follows. Binds mRNA; thus facilitating recognition of the initiation point. It is needed to translate mRNA with a short Shine-Dalgarno (SD) purine-rich sequence. The polypeptide is Small ribosomal subunit protein bS1 (rpsA) (Dickeya dadantii (strain 3937) (Erwinia chrysanthemi (strain 3937))).